Here is a 1432-residue protein sequence, read N- to C-terminus: ABC transporter B family member 3 (1432 aa).

2 disordered regions span residues 1 to 21 and 48 to 149; these read MDDGNENNENAQHDEYDEEEI and ITQP…KTEE. 3 stretches are compositionally biased toward low complexity: residues 52 to 62, 76 to 106, and 118 to 135; these read SNNNNNSNNNN, NNNNNNNNNNNNNNNNNNNNNNNSNNSFNNN, and NTNENNNKNNNNNNNNND. The stretch at 117–163 forms a coiled coil; it reads ENTNENNNKNNNNNNNNNDDYNDGADERVKTEEEIKKEAENELNQSV. In terms of domain architecture, ABC transmembrane type-1 1 spans 180–479; that stretch reads MFLGTIAAVI…ASPCLALFAQ (300 aa). The next 6 membrane-spanning stretches (helical) occupy residues 185 to 205, 232 to 252, 303 to 323, 325 to 345, 410 to 430, and 457 to 477; these read IAAVINGAAMPTVSLVFGLVV, LLMLGGGVFVLSYLETTLWMI, KVGRFIHFFSTFVAGFVIGFT, GWQLTLVITSVSPLLAIGGFF, GLGLGFVQFVILGTYALAFWY, and FFAVIIGATSIGQASPCLALF. The ABC transporter 1 domain occupies 514 to 750; the sequence is IEFKDVGFHY…QGLYFDLVEK (237 aa). 549–556 contributes to the ATP binding site; that stretch reads GDSGGGKS. The disordered stretch occupies residues 787–819; the sequence is KRSLRKNESESNKKDKEDSNNKKKKKSNKKKVE. The span at 791–807 shows a compositional bias: basic and acidic residues; that stretch reads RKNESESNKKDKEDSNN. The ABC transmembrane type-1 2 domain occupies 837–1157; sequence WCFGFLSAVG…ASSFAPDLAK (321 aa). 6 helical membrane passes run 838–858, 882–902, 968–988, 989–1009, 1060–1080, and 1134–1154; these read CFGFLSAVGTGAVYPGFAMVF, LMFVALAVGAGISNFFQGFLF, MVGGLVIAFYSGWQLTLVIIA, CFPLVVITSKVQMQILAGFSS, ISGFAFGFTQLILFCVYCLSF, and VFFAIVMSAIGVGQASSFAPD. The region spanning 1192–1428 is the ABC transporter 2 domain; the sequence is IEFKNLHFSY…EGPYSQLWYN (237 aa). 1227–1234 serves as a coordination point for ATP; that stretch reads GDSGGGKS.

The protein belongs to the ABC transporter superfamily. ABCB family. Multidrug resistance exporter (TC 3.A.1.201) subfamily.

The protein resides in the membrane. The protein is ABC transporter B family member 3 (abcB3) of Dictyostelium discoideum (Social amoeba).